Here is a 205-residue protein sequence, read N- to C-terminus: DNA-directed RNA polymerase RPB5 homolog (205 aa).

It belongs to the archaeal RpoH/eukaryotic RPB5 RNA polymerase subunit family. As to quaternary structure, part of the viral DNA-directed RNA polymerase that consists of 8 polII-like subunits (RPB1, RPB2, RPB3, RPB5, RPB6, RPB7, RPB9, RPB10), a capping enzyme and a termination factor.

It is found in the host cytoplasm. It localises to the virion. Component of the DNA-directed RNA polymerase (RNAP) that catalyzes the transcription in the cytoplasm of viral DNA into RNA using the four ribonucleoside triphosphates as substrates. The sequence is that of DNA-directed RNA polymerase RPB5 homolog from African swine fever virus (isolate Pig/Kenya/KEN-50/1950) (ASFV).